A 320-amino-acid polypeptide reads, in one-letter code: Ferrochelatase (320 aa).

Fe cation is bound by residues His-194 and Glu-275.

Belongs to the ferrochelatase family.

It is found in the cytoplasm. It carries out the reaction heme b + 2 H(+) = protoporphyrin IX + Fe(2+). It functions in the pathway porphyrin-containing compound metabolism; protoheme biosynthesis; protoheme from protoporphyrin-IX: step 1/1. Its function is as follows. Catalyzes the ferrous insertion into protoporphyrin IX. The polypeptide is Ferrochelatase (Vibrio cholerae serotype O1 (strain ATCC 39315 / El Tor Inaba N16961)).